Consider the following 370-residue polypeptide: CCA-adding enzyme (370 aa).

ATP contacts are provided by G8 and R11. CTP-binding residues include G8 and R11. Mg(2+)-binding residues include D21 and D23. The ATP site is built by R91, R137, and R140. 3 residues coordinate CTP: R91, R137, and R140.

Belongs to the tRNA nucleotidyltransferase/poly(A) polymerase family. Bacterial CCA-adding enzyme type 2 subfamily. Mg(2+) is required as a cofactor.

It catalyses the reaction a tRNA precursor + 2 CTP + ATP = a tRNA with a 3' CCA end + 3 diphosphate. It carries out the reaction a tRNA with a 3' CCA end + 2 CTP + ATP = a tRNA with a 3' CCACCA end + 3 diphosphate. In terms of biological role, catalyzes the addition and repair of the essential 3'-terminal CCA sequence in tRNAs without using a nucleic acid template. Adds these three nucleotides in the order of C, C, and A to the tRNA nucleotide-73, using CTP and ATP as substrates and producing inorganic pyrophosphate. tRNA 3'-terminal CCA addition is required both for tRNA processing and repair. Also involved in tRNA surveillance by mediating tandem CCA addition to generate a CCACCA at the 3' terminus of unstable tRNAs. While stable tRNAs receive only 3'-terminal CCA, unstable tRNAs are marked with CCACCA and rapidly degraded. The protein is CCA-adding enzyme of Pseudomonas putida (strain W619).